Here is a 218-residue protein sequence, read N- to C-terminus: Ribose-5-phosphate isomerase A (218 aa).

Substrate-binding positions include threonine 28–threonine 31, aspartate 81–aspartate 84, and lysine 94–glycine 97. Glutamate 103 functions as the Proton acceptor in the catalytic mechanism. Lysine 121 serves as a coordination point for substrate.

This sequence belongs to the ribose 5-phosphate isomerase family. As to quaternary structure, homodimer.

It carries out the reaction aldehydo-D-ribose 5-phosphate = D-ribulose 5-phosphate. The protein operates within carbohydrate degradation; pentose phosphate pathway; D-ribose 5-phosphate from D-ribulose 5-phosphate (non-oxidative stage): step 1/1. In terms of biological role, catalyzes the reversible conversion of ribose-5-phosphate to ribulose 5-phosphate. The protein is Ribose-5-phosphate isomerase A of Shewanella piezotolerans (strain WP3 / JCM 13877).